A 359-amino-acid polypeptide reads, in one-letter code: S-adenosylmethionine:tRNA ribosyltransferase-isomerase (359 aa).

Belongs to the QueA family. In terms of assembly, monomer.

The protein localises to the cytoplasm. It carries out the reaction 7-aminomethyl-7-carbaguanosine(34) in tRNA + S-adenosyl-L-methionine = epoxyqueuosine(34) in tRNA + adenine + L-methionine + 2 H(+). It participates in tRNA modification; tRNA-queuosine biosynthesis. Transfers and isomerizes the ribose moiety from AdoMet to the 7-aminomethyl group of 7-deazaguanine (preQ1-tRNA) to give epoxyqueuosine (oQ-tRNA). The polypeptide is S-adenosylmethionine:tRNA ribosyltransferase-isomerase (Synechococcus sp. (strain ATCC 27144 / PCC 6301 / SAUG 1402/1) (Anacystis nidulans)).